Reading from the N-terminus, the 309-residue chain is ATP synthase gamma chain (309 aa).

Belongs to the ATPase gamma chain family. As to quaternary structure, F-type ATPases have 2 components, CF(1) - the catalytic core - and CF(0) - the membrane proton channel. CF(1) has five subunits: alpha(3), beta(3), gamma(1), delta(1), epsilon(1). CF(0) has three main subunits: a, b and c.

It localises to the cell membrane. Its function is as follows. Produces ATP from ADP in the presence of a proton gradient across the membrane. The gamma chain is believed to be important in regulating ATPase activity and the flow of protons through the CF(0) complex. The sequence is that of ATP synthase gamma chain from Mycolicibacterium vanbaalenii (strain DSM 7251 / JCM 13017 / BCRC 16820 / KCTC 9966 / NRRL B-24157 / PYR-1) (Mycobacterium vanbaalenii).